Reading from the N-terminus, the 56-residue chain is Protein translocase subunit SecE (56 aa).

Residues 30 to 50 (VFWLVLFVSIFLGIVDYLMFL) traverse the membrane as a helical segment.

This sequence belongs to the SecE/SEC61-gamma family. In terms of assembly, component of the Sec protein translocase complex. Heterotrimer consisting of SecY, SecE and SecG subunits. The heterotrimers can form oligomers, although 1 heterotrimer is thought to be able to translocate proteins. Interacts with the ribosome. Interacts with SecDF, and other proteins may be involved. Interacts with SecA.

It localises to the cell inner membrane. Functionally, essential subunit of the Sec protein translocation channel SecYEG. Clamps together the 2 halves of SecY. May contact the channel plug during translocation. The sequence is that of Protein translocase subunit SecE from Borreliella burgdorferi (strain ATCC 35210 / DSM 4680 / CIP 102532 / B31) (Borrelia burgdorferi).